The chain runs to 443 residues: UPF0656 protein C926.02 (443 aa).

The protein belongs to the UPF0656 family.

It is found in the cytoplasm. It localises to the nucleus. This chain is UPF0656 protein C926.02, found in Schizosaccharomyces pombe (strain 972 / ATCC 24843) (Fission yeast).